The chain runs to 810 residues: LPS-assembly protein LptD (810 aa).

The first 29 residues, 1 to 29, serve as a signal peptide directing secretion; sequence MTKWTLGYSYPIALTISLIPALTPAIVQA.

The protein belongs to the LptD family. In terms of assembly, component of the lipopolysaccharide transport and assembly complex. Interacts with LptE and LptA.

The protein resides in the cell outer membrane. In terms of biological role, together with LptE, is involved in the assembly of lipopolysaccharide (LPS) at the surface of the outer membrane. The chain is LPS-assembly protein LptD from Aeromonas salmonicida (strain A449).